Here is a 313-residue protein sequence, read N- to C-terminus: Olfactory receptor 10G3 (313 aa).

Residues 1–25 (MERINSTLLTAFILTGIPYPLRLRT) lie on the Extracellular side of the membrane. N-linked (GlcNAc...) asparagine glycosylation occurs at Asn5. A helical transmembrane segment spans residues 26–46 (LFFVFFFLIYILTQLGNLLIL). Topologically, residues 47-54 (ITVWADPR) are cytoplasmic. A helical membrane pass occupies residues 55-76 (LHARPMYIFLGVLSVIDMSISS). The Extracellular segment spans residues 77–100 (IIVPRLMMNFTLGVKPIPFGGCVA). An N-linked (GlcNAc...) asparagine glycan is attached at Asn85. Cys98 and Cys190 are oxidised to a cystine. Residues 101-121 (QLYFYHFLGSTQCFLYTLMAY) form a helical membrane-spanning segment. The Cytoplasmic segment spans residues 122-140 (DRYLAICQPLRYPVLMTAK). The helical transmembrane segment at 141 to 161 (LSALLVAGAWMAGSIHGALQA) threads the bilayer. Over 162-198 (ILTFRLPYCGPNQVDYFFCDIPAVLRLACADTTVNEL) the chain is Extracellular. A helical transmembrane segment spans residues 199 to 218 (VTFVDIGVVVASCFSLILLS). The Cytoplasmic portion of the chain corresponds to 219-238 (YIQIIQAILRIHTADGRRRA). The helical transmembrane segment at 239–259 (FSTCGAHVTVVTVYYVPCAFI) threads the bilayer. Over 260–270 (YLRPETNSPLD) the chain is Extracellular. The helical transmembrane segment at 271-291 (GAAALVPTAITPFLNPLIYTL) threads the bilayer. Over 292 to 313 (RNQEVKLALKRMLRSPRTPSEV) the chain is Cytoplasmic.

Belongs to the G-protein coupled receptor 1 family.

It localises to the cell membrane. Functionally, odorant receptor. This Homo sapiens (Human) protein is Olfactory receptor 10G3 (OR10G3).